We begin with the raw amino-acid sequence, 258 residues long: 14-3-3 protein homolog (258 aa).

The protein belongs to the 14-3-3 family.

The chain is 14-3-3 protein homolog from Encephalitozoon cuniculi (strain GB-M1) (Microsporidian parasite).